We begin with the raw amino-acid sequence, 582 residues long: uncharacterized protein (582 aa).

6 helical membrane passes run 17-37 (VAML…LPTV), 57-77 (LGAV…GAVY), 131-151 (MTAT…IMAI), 156-176 (ALTW…YWII), 239-259 (ALML…LIWF), and 271-291 (VGSL…VLMA). The ABC transmembrane type-1 domain maps to 17 to 300 (VAMLMMLQLV…ATMTLAVLPR (284 aa)). The region spanning 335-571 (VRLAGATFTY…CPTYAEFAAS (237 aa)) is the ABC transporter domain. 369–376 (GSTGSGKS) lines the ATP pocket.

It belongs to the ABC transporter superfamily. MsbA family.

Its subcellular location is the cell membrane. This is an uncharacterized protein from Mycobacterium bovis (strain ATCC BAA-935 / AF2122/97).